A 208-amino-acid chain; its full sequence is Glycerol-3-phosphate acyltransferase (208 aa).

5 helical membrane passes run 3 to 23 (ILLA…VVVS), 51 to 71 (KAAI…VWLA), 78 to 98 (DVAI…PVFF), 115 to 135 (AVHP…AFFF), and 140 to 160 (LAAL…FGMP).

This sequence belongs to the PlsY family. In terms of assembly, probably interacts with PlsX.

It is found in the cell inner membrane. It catalyses the reaction an acyl phosphate + sn-glycerol 3-phosphate = a 1-acyl-sn-glycero-3-phosphate + phosphate. It functions in the pathway lipid metabolism; phospholipid metabolism. Functionally, catalyzes the transfer of an acyl group from acyl-phosphate (acyl-PO(4)) to glycerol-3-phosphate (G3P) to form lysophosphatidic acid (LPA). This enzyme utilizes acyl-phosphate as fatty acyl donor, but not acyl-CoA or acyl-ACP. The polypeptide is Glycerol-3-phosphate acyltransferase (Burkholderia orbicola (strain MC0-3)).